The following is a 129-amino-acid chain: Glycine cleavage system H protein (129 aa).

A Lipoyl-binding domain is found at leucine 24–lysine 106. At lysine 65 the chain carries N6-lipoyllysine.

The protein belongs to the GcvH family. In terms of assembly, the glycine cleavage system is composed of four proteins: P, T, L and H. (R)-lipoate is required as a cofactor.

The glycine cleavage system catalyzes the degradation of glycine. The H protein shuttles the methylamine group of glycine from the P protein to the T protein. The chain is Glycine cleavage system H protein from Prochlorococcus marinus (strain SARG / CCMP1375 / SS120).